The primary structure comprises 21 residues: Formate ester dehydrogenase beta chain (21 aa).

As to quaternary structure, heterotrimer composed of an alpha, a beta and a gamma chain.

The chain is Formate ester dehydrogenase beta chain from Amycolatopsis methanolica.